Here is a 293-residue protein sequence, read N- to C-terminus: Protease HtpX homolog (293 aa).

2 helical membrane-spanning segments follow: residues 6–26 and 28–48; these read VAVM…LIGG and SGMV…YWNS. Residue His130 coordinates Zn(2+). The active site involves Glu131. Residue His134 coordinates Zn(2+). The next 2 membrane-spanning stretches (helical) occupy residues 145 to 165 and 172 to 192; these read LTAT…FFGG and PLGA…AMMV. A Zn(2+)-binding site is contributed by Glu201.

It belongs to the peptidase M48B family. The cofactor is Zn(2+).

It is found in the cell inner membrane. The polypeptide is Protease HtpX homolog (Rhodospirillum rubrum (strain ATCC 11170 / ATH 1.1.1 / DSM 467 / LMG 4362 / NCIMB 8255 / S1)).